The sequence spans 642 residues: Threonine--tRNA ligase (642 aa).

In terms of domain architecture, TGS spans 1-61 (MPVITLPDGS…ESDAQLAIIT (61 aa)). The tract at residues 243–534 (DHRKIGKQLD…LTEEYAGFFP (292 aa)) is catalytic. Zn(2+) contacts are provided by Cys-334, His-385, and His-511.

Belongs to the class-II aminoacyl-tRNA synthetase family. As to quaternary structure, homodimer. Zn(2+) serves as cofactor.

The protein resides in the cytoplasm. It carries out the reaction tRNA(Thr) + L-threonine + ATP = L-threonyl-tRNA(Thr) + AMP + diphosphate + H(+). In terms of biological role, catalyzes the attachment of threonine to tRNA(Thr) in a two-step reaction: L-threonine is first activated by ATP to form Thr-AMP and then transferred to the acceptor end of tRNA(Thr). Also edits incorrectly charged L-seryl-tRNA(Thr). This chain is Threonine--tRNA ligase, found in Yersinia enterocolitica serotype O:8 / biotype 1B (strain NCTC 13174 / 8081).